The sequence spans 644 residues: Acetyl-coenzyme A synthetase (644 aa).

CoA is bound by residues 190–193 and T308; that span reads RGSK. ATP is bound by residues 384-386, 408-413, D497, and R512; these read GEP and DTWWQT. S520 is a CoA binding site. R523 serves as a coordination point for ATP. V534, H536, and V539 together coordinate Mg(2+). Residue R581 participates in CoA binding. N6-acetyllysine is present on K606.

The protein belongs to the ATP-dependent AMP-binding enzyme family. Requires Mg(2+) as cofactor. Acetylated. Deacetylation by the SIR2-homolog deacetylase activates the enzyme.

The catalysed reaction is acetate + ATP + CoA = acetyl-CoA + AMP + diphosphate. In terms of biological role, catalyzes the conversion of acetate into acetyl-CoA (AcCoA), an essential intermediate at the junction of anabolic and catabolic pathways. AcsA undergoes a two-step reaction. In the first half reaction, AcsA combines acetate with ATP to form acetyl-adenylate (AcAMP) intermediate. In the second half reaction, it can then transfer the acetyl group from AcAMP to the sulfhydryl group of CoA, forming the product AcCoA. This Magnetococcus marinus (strain ATCC BAA-1437 / JCM 17883 / MC-1) protein is Acetyl-coenzyme A synthetase.